A 425-amino-acid chain; its full sequence is Enolase (425 aa).

(2R)-2-phosphoglycerate is bound at residue glutamine 162. Residue glutamate 204 is the Proton donor of the active site. Residues aspartate 241, glutamate 288, and aspartate 315 each coordinate Mg(2+). (2R)-2-phosphoglycerate is bound by residues lysine 340, arginine 369, serine 370, and lysine 391. Catalysis depends on lysine 340, which acts as the Proton acceptor.

The protein belongs to the enolase family. Mg(2+) serves as cofactor.

The protein resides in the cytoplasm. It is found in the secreted. The protein localises to the cell surface. The catalysed reaction is (2R)-2-phosphoglycerate = phosphoenolpyruvate + H2O. Its pathway is carbohydrate degradation; glycolysis; pyruvate from D-glyceraldehyde 3-phosphate: step 4/5. Catalyzes the reversible conversion of 2-phosphoglycerate (2-PG) into phosphoenolpyruvate (PEP). It is essential for the degradation of carbohydrates via glycolysis. The protein is Enolase of Porphyromonas gingivalis (strain ATCC 33277 / DSM 20709 / CIP 103683 / JCM 12257 / NCTC 11834 / 2561).